Reading from the N-terminus, the 54-residue chain is Preprotein translocase subunit SecG (54 aa).

Topologically, residues 1-30 (MSKNKQDAGLSTSAGLVRYMDEDASKIKIA) are cytoplasmic. The chain crosses the membrane as a helical span at residues 31-52 (PEKVLGITISIMVLLFILNYGL). Topologically, residues 53–54 (LA) are extracellular.

It belongs to the SEC61-beta family. In terms of assembly, component of the protein translocase complex. Heterotrimer consisting of alpha (SecY), beta (SecG) and gamma (SecE) subunits. Can form oligomers of the heterotrimer.

It localises to the cell membrane. In terms of biological role, involved in protein export. The function of the beta subunit is unknown, but it may be involved in stabilization of the trimeric complex. The chain is Preprotein translocase subunit SecG from Methanococcus aeolicus (strain ATCC BAA-1280 / DSM 17508 / OCM 812 / Nankai-3).